A 617-amino-acid chain; its full sequence is DNA mismatch repair protein MutL (617 aa).

The tract at residues 363 to 394 is disordered; that stretch reads YAPAYGARPPQPSAWSVDTSPHRPLDDGQNRF. The segment covering 382 to 392 has biased composition (basic and acidic residues); sequence SPHRPLDDGQN.

The protein belongs to the DNA mismatch repair MutL/HexB family.

Its function is as follows. This protein is involved in the repair of mismatches in DNA. It is required for dam-dependent methyl-directed DNA mismatch repair. May act as a 'molecular matchmaker', a protein that promotes the formation of a stable complex between two or more DNA-binding proteins in an ATP-dependent manner without itself being part of a final effector complex. This Allorhizobium ampelinum (strain ATCC BAA-846 / DSM 112012 / S4) (Agrobacterium vitis (strain S4)) protein is DNA mismatch repair protein MutL.